Consider the following 1348-residue polypeptide: Kinesin-like protein KIF7 (1348 aa).

A Kinesin motor domain is found at 15–349 (PVRVALRVRP…LNYASRAQNI (335 aa)). Residue 94-101 (GQTGSGKT) coordinates ATP. The interval 358-479 (HPEAERVPEE…EDQAAQGTSG (122 aa)) is interaction with DLG5. Residues 358–1211 (HPEAERVPEE…LGRHMWINQE (854 aa)) are interaction with SMO. Disordered stretches follow at residues 451–486 (RSTLSSASGPDSGIESAPAEDQAAQGTSGRKGDEGT) and 607–674 (AQAD…VCPE). Residues 480–542 (RKGDEGTQQL…ELRLRLELAQ (63 aa)) adopt a coiled-coil conformation. Residues 620–636 (SEEEGEEEEEEEEEEEE) show a composition bias toward acidic residues. 2 coiled-coil regions span residues 698-1057 (APAA…IEAL) and 1109-1211 (FDKV…INQE). Phosphoserine is present on serine 903. 2 disordered regions span residues 1288–1314 (LCSEQGSSEESRVRETTEPPVGRVLPM) and 1328–1348 (KPRWEPRRTSPGMIDVRKNPL).

It belongs to the TRAFAC class myosin-kinesin ATPase superfamily. Kinesin family. In terms of assembly, can form homodimers and interacts with microtubules. Interacts with GLI1 and SMO. Interacts with GLI2, GLI3 and SUFU. Interacts with NPHP1. Interacts with SMO and DLG5 (via PDZ4 or guanylate kinase-like domain). Post-translationally, polyubiquitinated by UBR3. As to expression, expressed in heart, lung, liver, kidney, testis, spleen and cerebellum.

It is found in the cell projection. It localises to the cilium. Its subcellular location is the cytoplasm. The protein localises to the cytoskeleton. The protein resides in the cilium basal body. Essential for hedgehog signaling regulation: acts both as a negative and a positive regulator of sonic hedgehog (Shh) and Indian hedgehog (Ihh) pathways, acting downstream of SMO, through both SUFU-dependent and -independent mechanisms. Involved in the regulation of microtubular dynamics. Required for proper organization of the ciliary tip and control of ciliary localization of SUFU-GLI2 complexes. Required for localization of GLI3 to cilia in response to Shh. Negatively regulates Shh signaling by preventing inappropriate activation of the transcriptional activator GLI2 in the absence of ligand. Positively regulates Shh signaling by preventing the processing of the transcription factor GLI3 into its repressor form. In keratinocytes, promotes the dissociation of SUFU-GLI2 complexes, GLI2 nuclear translocation and Shh signaling activation. Involved in the regulation of epidermal differentiation and chondrocyte development. This Mus musculus (Mouse) protein is Kinesin-like protein KIF7 (Kif7).